Consider the following 201-residue polypeptide: Recombination protein RecR (201 aa).

A C4-type zinc finger spans residues 59-74 (CEICGNMDTENICRIC). The 96-residue stretch at 82–177 (SIIAIVETVA…KISRLASGIP (96 aa)) folds into the Toprim domain.

It belongs to the RecR family.

In terms of biological role, may play a role in DNA repair. It seems to be involved in an RecBC-independent recombinational process of DNA repair. It may act with RecF and RecO. The sequence is that of Recombination protein RecR from Rickettsia peacockii (strain Rustic).